A 266-amino-acid chain; its full sequence is Hydroxyethylthiazole kinase (266 aa).

A substrate-binding site is contributed by Met44. Residues Lys120 and Thr166 each coordinate ATP. Gly193 contributes to the substrate binding site.

This sequence belongs to the Thz kinase family. Mg(2+) is required as a cofactor.

The catalysed reaction is 5-(2-hydroxyethyl)-4-methylthiazole + ATP = 4-methyl-5-(2-phosphooxyethyl)-thiazole + ADP + H(+). Its pathway is cofactor biosynthesis; thiamine diphosphate biosynthesis; 4-methyl-5-(2-phosphoethyl)-thiazole from 5-(2-hydroxyethyl)-4-methylthiazole: step 1/1. Its function is as follows. Catalyzes the phosphorylation of the hydroxyl group of 4-methyl-5-beta-hydroxyethylthiazole (THZ). In Syntrophomonas wolfei subsp. wolfei (strain DSM 2245B / Goettingen), this protein is Hydroxyethylthiazole kinase.